The primary structure comprises 458 residues: ATP synthase subunit beta (458 aa).

Gly-148–Thr-155 lines the ATP pocket.

It belongs to the ATPase alpha/beta chains family. In terms of assembly, F-type ATPases have 2 components, CF(1) - the catalytic core - and CF(0) - the membrane proton channel. CF(1) has five subunits: alpha(3), beta(3), gamma(1), delta(1), epsilon(1). CF(0) has three main subunits: a(1), b(2) and c(9-12). The alpha and beta chains form an alternating ring which encloses part of the gamma chain. CF(1) is attached to CF(0) by a central stalk formed by the gamma and epsilon chains, while a peripheral stalk is formed by the delta and b chains.

It is found in the cell inner membrane. It catalyses the reaction ATP + H2O + 4 H(+)(in) = ADP + phosphate + 5 H(+)(out). Functionally, produces ATP from ADP in the presence of a proton gradient across the membrane. The catalytic sites are hosted primarily by the beta subunits. This chain is ATP synthase subunit beta, found in Francisella tularensis subsp. tularensis (strain FSC 198).